Consider the following 367-residue polypeptide: Carbamoyl-phosphate synthase (367 aa).

The 186-residue stretch at 111–296 (KEFYNEIGVP…SLCELVNMAA (186 aa)) folds into the ATP-grasp domain. ATP is bound at residue 137–186 (KMEFPVVLKQGQGQGGKDIKVAESLDDVKEYFEEFDHALCEKFIEGSEIS). D253, E267, and N269 together coordinate Mg(2+). The Mn(2+) site is built by D253, E267, and N269.

It belongs to the small carbamoyl-phosphate synthase family. Forms homodimers and homotetramers (dimers of dimers). It depends on Mg(2+) as a cofactor. Mn(2+) serves as cofactor.

The enzyme catalyses hydrogencarbonate + NH4(+) + 2 ATP = carbamoyl phosphate + 2 ADP + phosphate + 2 H(+). Functionally, catalyzes the synthesis of carbamoyl phosphate from ATP, ammonium and bicarbonate. Proceeds via a three-step mechanism, i.e. the phosphorylation of hydrogencarbonate to carboxyphosphate, a nucleophilic attack of ammonia on carboxyphosphate yielding carbamate, and the phosphorylation of carbamate forming carbamoyl phosphate. In M.smithii, the predominant archaeon in the human gut, one function of this enzyme may be to sequester ammonia, a scarce nutrient in the intestine which is the major source of nitrogen in M.smithii for the biosynthesis of nucleotides, amino acids, and many other metabolites. The polypeptide is Carbamoyl-phosphate synthase (Methanobrevibacter smithii (strain ATCC 35061 / DSM 861 / OCM 144 / PS)).